The sequence spans 312 residues: Glyoxylate/hydroxypyruvate reductase A (312 aa).

Arg227 is a catalytic residue. His275 (proton donor) is an active-site residue.

It belongs to the D-isomer specific 2-hydroxyacid dehydrogenase family. GhrA subfamily.

It localises to the cytoplasm. It carries out the reaction glycolate + NADP(+) = glyoxylate + NADPH + H(+). The enzyme catalyses (R)-glycerate + NAD(+) = 3-hydroxypyruvate + NADH + H(+). It catalyses the reaction (R)-glycerate + NADP(+) = 3-hydroxypyruvate + NADPH + H(+). Its function is as follows. Catalyzes the NADPH-dependent reduction of glyoxylate and hydroxypyruvate into glycolate and glycerate, respectively. The sequence is that of Glyoxylate/hydroxypyruvate reductase A from Salmonella paratyphi C (strain RKS4594).